The following is a 736-amino-acid chain: Epithelial splicing regulatory protein 2 (736 aa).

RRM domains lie at 224-301, 325-405, and 659-736; these read TVIR…KATG, MIIR…RSTA, and ALVR…ACCE.

Belongs to the ESRP family.

It is found in the nucleus. MRNA splicing factor that regulates the formation of epithelial cell-specific isoforms. Specifically regulates the expression of FGFR2-IIIb, an epithelial cell-specific isoform of fgfr2. Acts by directly binding specific sequences in mRNAs. Binds the GU-rich sequence motifs in the ISE/ISS-3, a cis-element regulatory region present in the mRNA of fgfr2. The sequence is that of Epithelial splicing regulatory protein 2 (esrp2) from Danio rerio (Zebrafish).